The primary structure comprises 335 residues: Nucleoid-associated protein YejK (335 aa).

The protein belongs to the YejK family.

The protein resides in the cytoplasm. It localises to the nucleoid. The sequence is that of Nucleoid-associated protein YejK from Shigella boydii serotype 18 (strain CDC 3083-94 / BS512).